An 86-amino-acid chain; its full sequence is Ferredoxin YfhL (86 aa).

4Fe-4S ferredoxin-type domains follow at residues 1–29 and 31–65; these read MALL…MGDH and YEIN…KDPA. [4Fe-4S] cluster is bound by residues cysteine 9, cysteine 12, cysteine 15, cysteine 19, cysteine 38, cysteine 41, cysteine 50, and cysteine 54.

It depends on [4Fe-4S] cluster as a cofactor.

In terms of biological role, ferredoxins are iron-sulfur proteins that transfer electrons in a wide variety of metabolic reactions. This chain is Ferredoxin YfhL (yfhL), found in Escherichia coli (strain K12).